The primary structure comprises 364 residues: Glycerophosphodiester phosphodiesterase (364 aa).

The first 18 residues, 1–18 (MKLKTLALSLLAAGVLAG), serve as a signal peptide directing secretion. Residue C19 is the site of N-palmitoyl cysteine attachment. C19 carries S-diacylglycerol cysteine lipidation. In terms of domain architecture, GP-PDE spans 35 to 360 (KIIIAHRGAS…DFPDTGVEFL (326 aa)). H40 functions as the Proton acceptor in the catalytic mechanism. Ca(2+) is bound by residues E67 and D69. Residue H82 is the Proton donor of the active site. E175 is a binding site for Ca(2+).

Belongs to the glycerophosphoryl diester phosphodiesterase family. The cofactor is Ca(2+). In terms of processing, contains both ester- and amide-linked fatty acids.

It localises to the cell outer membrane. The enzyme catalyses a sn-glycero-3-phosphodiester + H2O = an alcohol + sn-glycerol 3-phosphate + H(+). In terms of biological role, glycerophosphodiester phosphodiesterase hydrolyzes glycerophosphodiesters into glycerol-3-phosphate (G3P) and the corresponding alcohol. Has a specific affinity for human immunoglobulin D myeloma protein. The protein is Glycerophosphodiester phosphodiesterase (glpQ) of Haemophilus influenzae (strain ATCC 51907 / DSM 11121 / KW20 / Rd).